Consider the following 194-residue polypeptide: Crossover junction endodeoxyribonuclease RuvC (194 aa).

Residues Asp8, Glu72, and Asp144 contribute to the active site. Positions 8, 72, and 144 each coordinate Mg(2+).

The protein belongs to the RuvC family. As to quaternary structure, homodimer which binds Holliday junction (HJ) DNA. The HJ becomes 2-fold symmetrical on binding to RuvC with unstacked arms; it has a different conformation from HJ DNA in complex with RuvA. In the full resolvosome a probable DNA-RuvA(4)-RuvB(12)-RuvC(2) complex forms which resolves the HJ. Requires Mg(2+) as cofactor.

Its subcellular location is the cytoplasm. The catalysed reaction is Endonucleolytic cleavage at a junction such as a reciprocal single-stranded crossover between two homologous DNA duplexes (Holliday junction).. In terms of biological role, the RuvA-RuvB-RuvC complex processes Holliday junction (HJ) DNA during genetic recombination and DNA repair. Endonuclease that resolves HJ intermediates. Cleaves cruciform DNA by making single-stranded nicks across the HJ at symmetrical positions within the homologous arms, yielding a 5'-phosphate and a 3'-hydroxyl group; requires a central core of homology in the junction. The consensus cleavage sequence is 5'-(A/T)TT(C/G)-3'. Cleavage occurs on the 3'-side of the TT dinucleotide at the point of strand exchange. HJ branch migration catalyzed by RuvA-RuvB allows RuvC to scan DNA until it finds its consensus sequence, where it cleaves and resolves the cruciform DNA. The polypeptide is Crossover junction endodeoxyribonuclease RuvC (Psychrobacter sp. (strain PRwf-1)).